Here is a 351-residue protein sequence, read N- to C-terminus: Protein Maqu_2141 (351 aa).

The protein belongs to the proline racemase family.

Displays neither proline racemase activity nor trans-4-hydroxy-L-proline (t4LHyp) epimerase activity nor t3LHyp dehydratase activity. The polypeptide is Protein Maqu_2141 (Marinobacter nauticus (strain ATCC 700491 / DSM 11845 / VT8) (Marinobacter aquaeolei)).